We begin with the raw amino-acid sequence, 60 residues long: Large ribosomal subunit protein bL32 (60 aa).

The protein belongs to the bacterial ribosomal protein bL32 family.

In Streptococcus gordonii (strain Challis / ATCC 35105 / BCRC 15272 / CH1 / DL1 / V288), this protein is Large ribosomal subunit protein bL32.